A 352-amino-acid polypeptide reads, in one-letter code: N-terminal EF-hand calcium-binding protein 1 (352 aa).

A Phosphoserine modification is found at Ser4. EF-hand domains lie at 26–61 (KGMS…GVLS) and 60–95 (LSGE…HLGE). Residues Asp39, Asn41, Asp43, Lys45, and Glu50 each contribute to the Ca(2+) site. Positions 135–163 (LLKETLNQLQSLQNSLECAMETTEEQTRQ) form a coiled coil. The segment at 155 to 202 (ETTEEQTRQERQGPSKPEVLSIQWPGKRSSRRVQRHNSFSPNSPQFNV) is disordered. Residues 190–202 (HNSFSPNSPQFNV) are compositionally biased toward polar residues. Phosphoserine occurs at positions 192 and 197. The stretch at 209-275 (EEDNQWMTQI…EEFQLALKHY (67 aa)) forms a coiled coil. The region spanning 252-340 (MLVQRQMSVT…LETPELTSTM (89 aa)) is the ABM domain.

In terms of assembly, interacts with STX1. May interact with CPNE6.

It localises to the cytoplasm. The chain is N-terminal EF-hand calcium-binding protein 1 (Necab1) from Rattus norvegicus (Rat).